We begin with the raw amino-acid sequence, 692 residues long: MESRREKNPMTEEESDGLIAARRIQRLSLHLSPSLTPSPSLPLVQTETCSARSKKLDVNGEALSLYMRGKHIDIQEKIFDFFNSRPDLQTPIEISKDDHRELCMNQLIGLVREAGVRPFRYVADDPEKYFAIMEAVGSVDMSLGIKMGVQYSLWGGSVINLGTKKHRDKYFDGIDNLDYTGCFAMTELHHGSNVQGLQTTATFDPLKDEFVIDTPNDGAIKWWIGNAAVHGKFATVFARLILPTHDSKGVSDMGVHAFIVPIRDMKTHQTLPGVEIQDCGHKVGLNGVDNGALRFRSVRIPRDNLLNRFGDVSRDGTYTSSLPTINKRFGATLGELVGGRVGLAYASVGVLKISATIAIRYSLLRQQFGPPKQPEVSILDYQSQQHKLMPMLASTYAYHFATVYLVEKYSEMKKTHDEQLVADVHALSAGLKSYVTSYTAKALSVCREACGGHGYAAVNRFGSLRNDHDIFQTFEGDNTVLLQQVAADLLKRYKEKFQGGTLTVTWSYLRESMNTYLSQPNPVTARWEGEDHLRDPKFQLDAFRYRTSRLLQNVAARLQKHSKTLGGFGAWNRCLNHLLTLAESHIETVILAKFIEAVKNCPDPSAKAALKLACDLYALDRIWKDIGTYRNVDYVAPNKAKAIHKLTEYLSFQVRNVAKELVDAFELPDHVTRAPIAMQSDAYSQYTQVVGF.

The N-terminal 49 residues, 1-49 (MESRREKNPMTEEESDGLIAARRIQRLSLHLSPSLTPSPSLPLVQTETC), are a transit peptide targeting the peroxisome. Positions 186, 192, 225, 365, 384, 452, and 473 each coordinate FAD. Glutamate 475 functions as the Proton acceptor in the catalytic mechanism. Aspartate 477 is an FAD binding site.

This sequence belongs to the acyl-CoA oxidase family. Homodimer. FAD serves as cofactor. Expressed mainly in flowers and young seedlings. Lower expression in roots, leaves and bracts.

It is found in the peroxisome. The enzyme catalyses a 2,3-saturated acyl-CoA + O2 = a (2E)-enoyl-CoA + H2O2. Its function is as follows. Catalyzes the desaturation of long-chain acyl-CoAs to 2-trans-enoyl-CoAs. Active on substrates longer than C14 and mostly with C18-CoA. Activity on long-chain mono-unsaturated substrates is double than with the corresponding saturated substrates. This Arabidopsis thaliana (Mouse-ear cress) protein is Acyl-coenzyme A oxidase 2, peroxisomal.